The following is a 416-amino-acid chain: Glutamyl-tRNA reductase (416 aa).

Substrate is bound by residues 51-54 (TCNR), Ser110, 115-117 (EPQ), and Gln121. Cys52 functions as the Nucleophile in the catalytic mechanism. 190-195 (GAGQTG) provides a ligand contact to NADP(+).

Belongs to the glutamyl-tRNA reductase family. Homodimer.

It carries out the reaction (S)-4-amino-5-oxopentanoate + tRNA(Glu) + NADP(+) = L-glutamyl-tRNA(Glu) + NADPH + H(+). It participates in porphyrin-containing compound metabolism; protoporphyrin-IX biosynthesis; 5-aminolevulinate from L-glutamyl-tRNA(Glu): step 1/2. Catalyzes the NADPH-dependent reduction of glutamyl-tRNA(Glu) to glutamate 1-semialdehyde (GSA). This is Glutamyl-tRNA reductase from Francisella tularensis subsp. holarctica (strain OSU18).